A 583-amino-acid chain; its full sequence is 2-succinyl-5-enolpyruvyl-6-hydroxy-3-cyclohexene-1-carboxylate synthase (583 aa).

The protein belongs to the TPP enzyme family. MenD subfamily. Homodimer. Requires Mg(2+) as cofactor. It depends on Mn(2+) as a cofactor. Thiamine diphosphate is required as a cofactor.

It catalyses the reaction isochorismate + 2-oxoglutarate + H(+) = 5-enolpyruvoyl-6-hydroxy-2-succinyl-cyclohex-3-ene-1-carboxylate + CO2. It functions in the pathway quinol/quinone metabolism; 1,4-dihydroxy-2-naphthoate biosynthesis; 1,4-dihydroxy-2-naphthoate from chorismate: step 2/7. It participates in cofactor biosynthesis; phylloquinone biosynthesis. In terms of biological role, catalyzes the thiamine diphosphate-dependent decarboxylation of 2-oxoglutarate and the subsequent addition of the resulting succinic semialdehyde-thiamine pyrophosphate anion to isochorismate to yield 2-succinyl-5-enolpyruvyl-6-hydroxy-3-cyclohexene-1-carboxylate (SEPHCHC). In Trichormus variabilis (strain ATCC 29413 / PCC 7937) (Anabaena variabilis), this protein is 2-succinyl-5-enolpyruvyl-6-hydroxy-3-cyclohexene-1-carboxylate synthase.